We begin with the raw amino-acid sequence, 43 residues long: Protein PsbN (43 aa).

The helical transmembrane segment at threonine 5–isoleucine 25 threads the bilayer.

This sequence belongs to the PsbN family.

The protein localises to the plastid. It is found in the chloroplast thylakoid membrane. Its function is as follows. May play a role in photosystem I and II biogenesis. In Gracilaria tenuistipitata var. liui (Red alga), this protein is Protein PsbN.